The primary structure comprises 448 residues: Phosphoglucosamine mutase (448 aa).

Ser-100 serves as the catalytic Phosphoserine intermediate. The Mg(2+) site is built by Ser-100, Asp-240, Asp-242, and Asp-244. Position 100 is a phosphoserine (Ser-100).

The protein belongs to the phosphohexose mutase family. It depends on Mg(2+) as a cofactor. Activated by phosphorylation.

The catalysed reaction is alpha-D-glucosamine 1-phosphate = D-glucosamine 6-phosphate. Functionally, catalyzes the conversion of glucosamine-6-phosphate to glucosamine-1-phosphate. This Clostridium tetani (strain Massachusetts / E88) protein is Phosphoglucosamine mutase.